A 293-amino-acid polypeptide reads, in one-letter code: ATP synthase gamma chain (293 aa).

Belongs to the ATPase gamma chain family. In terms of assembly, F-type ATPases have 2 components, CF(1) - the catalytic core - and CF(0) - the membrane proton channel. CF(1) has five subunits: alpha(3), beta(3), gamma(1), delta(1), epsilon(1). CF(0) has three main subunits: a, b and c.

Its subcellular location is the cell inner membrane. Functionally, produces ATP from ADP in the presence of a proton gradient across the membrane. The gamma chain is believed to be important in regulating ATPase activity and the flow of protons through the CF(0) complex. The protein is ATP synthase gamma chain of Leptothrix cholodnii (strain ATCC 51168 / LMG 8142 / SP-6) (Leptothrix discophora (strain SP-6)).